The chain runs to 259 residues: UPF0246 protein RD1_0358 (259 aa).

Belongs to the UPF0246 family.

The protein is UPF0246 protein RD1_0358 of Roseobacter denitrificans (strain ATCC 33942 / OCh 114) (Erythrobacter sp. (strain OCh 114)).